A 264-amino-acid polypeptide reads, in one-letter code: Siroheme biosynthesis protein met8 (264 aa).

NAD(+) is bound by residues 32-33 and 53-56; these read VV and PKAG. The Proton acceptor role is filled by Asp117.

This sequence belongs to the precorrin-2 dehydrogenase / sirohydrochlorin ferrochelatase family. MET8 subfamily.

It is found in the cytoplasm. Its subcellular location is the nucleus. It catalyses the reaction precorrin-2 + NAD(+) = sirohydrochlorin + NADH + 2 H(+). The enzyme catalyses siroheme + 2 H(+) = sirohydrochlorin + Fe(2+). Its pathway is porphyrin-containing compound metabolism; siroheme biosynthesis; siroheme from sirohydrochlorin: step 1/1. The protein operates within porphyrin-containing compound metabolism; siroheme biosynthesis; sirohydrochlorin from precorrin-2: step 1/1. Catalyzes the conversion of precorrin-2 into siroheme. This reaction consist of the NAD-dependent oxidation of precorrin-2 into sirohydrochlorin and its subsequent ferrochelation into siroheme. The sequence is that of Siroheme biosynthesis protein met8 (met8) from Schizosaccharomyces pombe (strain 972 / ATCC 24843) (Fission yeast).